Here is a 279-residue protein sequence, read N- to C-terminus: 30 kDa ribonucleoprotein, chloroplastic (279 aa).

Residues 87–165 form the RRM 1 domain; sequence LKIFVGNLLF…RALRVNSGPP (79 aa). A disordered region spans residues 156–187; sequence RALRVNSGPPPEKRENSSFRENSSFRGGSRGG. The interval 166–193 is linker (Gly-rich); the sequence is PEKRENSSFRENSSFRGGSRGGGSFDSS. The RRM 2 domain maps to 194 to 272; it reads NRVYVGNLAW…RAIRVSPAEA (79 aa).

In terms of tissue distribution, expressed at high levels in the leaves and seedlings, and lower levels are seen in the stems and roots.

The protein resides in the plastid. The protein localises to the chloroplast. In terms of biological role, could be involved in splicing and/or processing of chloroplast RNA's. In Nicotiana plumbaginifolia (Leadwort-leaved tobacco), this protein is 30 kDa ribonucleoprotein, chloroplastic.